Reading from the N-terminus, the 449-residue chain is UDP-N-acetylmuramoylalanine--D-glutamate ligase (449 aa).

Residue 118-124 coordinates ATP; it reads GSNGKTT.

It belongs to the MurCDEF family.

The protein resides in the cytoplasm. The catalysed reaction is UDP-N-acetyl-alpha-D-muramoyl-L-alanine + D-glutamate + ATP = UDP-N-acetyl-alpha-D-muramoyl-L-alanyl-D-glutamate + ADP + phosphate + H(+). It participates in cell wall biogenesis; peptidoglycan biosynthesis. Cell wall formation. Catalyzes the addition of glutamate to the nucleotide precursor UDP-N-acetylmuramoyl-L-alanine (UMA). This is UDP-N-acetylmuramoylalanine--D-glutamate ligase from Leuconostoc mesenteroides subsp. mesenteroides (strain ATCC 8293 / DSM 20343 / BCRC 11652 / CCM 1803 / JCM 6124 / NCDO 523 / NBRC 100496 / NCIMB 8023 / NCTC 12954 / NRRL B-1118 / 37Y).